The primary structure comprises 214 residues: Dynein axonemal assembly factor 6 (214 aa).

Disordered regions lie at residues 1–22 (MESENMDSENMKTENMESQNVD) and 34–68 (ALSKLLNPEEEDDSDYGQTNGLSTIGAMGPGNIGP).

This sequence belongs to the PIH1 family. As to quaternary structure, interacts with HSPA1A/B and HSP90AA1. Interacts with DNAAF2 and DNAAF4. Interacts wuth DNAI2. As to expression, expressed in testis, small intestine, prostate, adrenal gland, spleen, lung, bladder, breast and ovary. Expressed in ciliated epithelial cells.

It is found in the cytoplasm. It localises to the golgi apparatus. The protein localises to the trans-Golgi network. Functionally, plays a role in cytoplasmic pre-assembly of axonemal dynein. The protein is Dynein axonemal assembly factor 6 of Homo sapiens (Human).